The primary structure comprises 154 residues: 6,7-dimethyl-8-ribityllumazine synthase (154 aa).

5-amino-6-(D-ribitylamino)uracil-binding positions include Phe-15, Thr-47–Asp-49, and Ala-71–Ile-73. Glu-76 to Thr-77 is a binding site for (2S)-2-hydroxy-3-oxobutyl phosphate. His-79 serves as the catalytic Proton donor. 5-amino-6-(D-ribitylamino)uracil is bound at residue Leu-104. Arg-119 is a (2S)-2-hydroxy-3-oxobutyl phosphate binding site.

It belongs to the DMRL synthase family.

It carries out the reaction (2S)-2-hydroxy-3-oxobutyl phosphate + 5-amino-6-(D-ribitylamino)uracil = 6,7-dimethyl-8-(1-D-ribityl)lumazine + phosphate + 2 H2O + H(+). It participates in cofactor biosynthesis; riboflavin biosynthesis; riboflavin from 2-hydroxy-3-oxobutyl phosphate and 5-amino-6-(D-ribitylamino)uracil: step 1/2. Catalyzes the formation of 6,7-dimethyl-8-ribityllumazine by condensation of 5-amino-6-(D-ribitylamino)uracil with 3,4-dihydroxy-2-butanone 4-phosphate. This is the penultimate step in the biosynthesis of riboflavin. In Saccharolobus solfataricus (strain ATCC 35092 / DSM 1617 / JCM 11322 / P2) (Sulfolobus solfataricus), this protein is 6,7-dimethyl-8-ribityllumazine synthase.